Here is a 387-residue protein sequence, read N- to C-terminus: [LysW]-aminoadipate semialdehyde/glutamate semialdehyde transaminase (387 aa).

Pyridoxal 5'-phosphate-binding positions include 96 to 97 (GT) and F123. R126 lines the substrate pocket. Residue 207–210 (DEIQ) participates in pyridoxal 5'-phosphate binding. An N6-(pyridoxal phosphate)lysine modification is found at K236. S264 provides a ligand contact to substrate. T265 contacts pyridoxal 5'-phosphate.

The protein belongs to the class-III pyridoxal-phosphate-dependent aminotransferase family. LysJ subfamily. In terms of assembly, homodimer. It depends on pyridoxal 5'-phosphate as a cofactor.

The protein localises to the cytoplasm. The enzyme catalyses [amino-group carrier protein]-C-terminal-gamma-(L-lysyl)-L-glutamate + 2-oxoglutarate = [amino-group carrier protein]-C-terminal-N-(1-carboxy-5-oxopentan-1-yl)-L-glutamine + L-glutamate. It catalyses the reaction [amino-group carrier protein]-C-terminal-gamma-(L-ornithyl)-L-glutamate + 2-oxoglutarate = [amino-group carrier protein]-C-terminal-gamma-(L-glutamyl-5-semialdehyde)-L-glutamate + L-glutamate. The protein operates within amino-acid biosynthesis; L-lysine biosynthesis via AAA pathway; L-lysine from L-alpha-aminoadipate (Thermus route): step 4/5. It functions in the pathway amino-acid biosynthesis; L-arginine biosynthesis. Involved in both the arginine and lysine biosynthetic pathways. This is [LysW]-aminoadipate semialdehyde/glutamate semialdehyde transaminase from Sulfolobus acidocaldarius (strain ATCC 33909 / DSM 639 / JCM 8929 / NBRC 15157 / NCIMB 11770).